Here is a 397-residue protein sequence, read N- to C-terminus: Homoserine O-acetyltransferase (397 aa).

The AB hydrolase-1 domain maps to 58–368 (NAVLVLHALT…EAKWGHDAFL (311 aa)). Catalysis depends on S164, which acts as the Nucleophile. Residue R233 participates in substrate binding. Active-site residues include D331 and H364. Position 365 (D365) interacts with substrate.

The protein belongs to the AB hydrolase superfamily. MetX family. As to quaternary structure, homodimer.

It localises to the cytoplasm. The enzyme catalyses L-homoserine + acetyl-CoA = O-acetyl-L-homoserine + CoA. It functions in the pathway amino-acid biosynthesis; L-methionine biosynthesis via de novo pathway; O-acetyl-L-homoserine from L-homoserine: step 1/1. Functionally, transfers an acetyl group from acetyl-CoA to L-homoserine, forming acetyl-L-homoserine. The protein is Homoserine O-acetyltransferase of Solidesulfovibrio magneticus (strain ATCC 700980 / DSM 13731 / RS-1) (Desulfovibrio magneticus).